The following is a 239-amino-acid chain: Small ribosomal subunit protein uS3 (239 aa).

Positions 39–107 (VRQVLRKKMS…SVHINVIEVR (69 aa)) constitute a KH type-2 domain. Residues 217 to 239 (KQDDISRGDRNADRSSRRSREVR) are disordered.

It belongs to the universal ribosomal protein uS3 family. As to quaternary structure, part of the 30S ribosomal subunit. Forms a tight complex with proteins S10 and S14.

Binds the lower part of the 30S subunit head. Binds mRNA in the 70S ribosome, positioning it for translation. The polypeptide is Small ribosomal subunit protein uS3 (Xylella fastidiosa (strain 9a5c)).